A 351-amino-acid polypeptide reads, in one-letter code: Nicotinate-nucleotide--dimethylbenzimidazole phosphoribosyltransferase (351 aa).

Glutamate 318 functions as the Proton acceptor in the catalytic mechanism.

The protein belongs to the CobT family.

It carries out the reaction 5,6-dimethylbenzimidazole + nicotinate beta-D-ribonucleotide = alpha-ribazole 5'-phosphate + nicotinate + H(+). The protein operates within nucleoside biosynthesis; alpha-ribazole biosynthesis; alpha-ribazole from 5,6-dimethylbenzimidazole: step 1/2. In terms of biological role, catalyzes the synthesis of alpha-ribazole-5'-phosphate from nicotinate mononucleotide (NAMN) and 5,6-dimethylbenzimidazole (DMB). This Chloroflexus aurantiacus (strain ATCC 29366 / DSM 635 / J-10-fl) protein is Nicotinate-nucleotide--dimethylbenzimidazole phosphoribosyltransferase.